Here is a 202-residue protein sequence, read N- to C-terminus: Orotate phosphoribosyltransferase (202 aa).

5-phospho-alpha-D-ribose 1-diphosphate is bound by residues Lys93 and 113–121 (EDIITTGGS). Residues Thr117 and Arg145 each coordinate orotate.

Belongs to the purine/pyrimidine phosphoribosyltransferase family. PyrE subfamily. As to quaternary structure, homodimer. Requires Mg(2+) as cofactor.

It catalyses the reaction orotidine 5'-phosphate + diphosphate = orotate + 5-phospho-alpha-D-ribose 1-diphosphate. Its pathway is pyrimidine metabolism; UMP biosynthesis via de novo pathway; UMP from orotate: step 1/2. In terms of biological role, catalyzes the transfer of a ribosyl phosphate group from 5-phosphoribose 1-diphosphate to orotate, leading to the formation of orotidine monophosphate (OMP). The chain is Orotate phosphoribosyltransferase from Campylobacter jejuni subsp. jejuni serotype O:23/36 (strain 81-176).